A 298-amino-acid polypeptide reads, in one-letter code: N-acetylmuramic acid 6-phosphate etherase (298 aa).

The region spanning 55–218 (ITESLRRGGR…STASMVRLGK (164 aa)) is the SIS domain. Residue E83 is the Proton donor of the active site. E114 is a catalytic residue.

Belongs to the GCKR-like family. MurNAc-6-P etherase subfamily. Homodimer.

The enzyme catalyses N-acetyl-D-muramate 6-phosphate + H2O = N-acetyl-D-glucosamine 6-phosphate + (R)-lactate. Its pathway is amino-sugar metabolism; N-acetylmuramate degradation. Functionally, specifically catalyzes the cleavage of the D-lactyl ether substituent of MurNAc 6-phosphate, producing GlcNAc 6-phosphate and D-lactate. This is N-acetylmuramic acid 6-phosphate etherase from Mycolicibacterium smegmatis (strain ATCC 700084 / mc(2)155) (Mycobacterium smegmatis).